Reading from the N-terminus, the 468-residue chain is 3-isopropylmalate dehydratase large subunit (468 aa).

The [4Fe-4S] cluster site is built by cysteine 347, cysteine 408, and cysteine 411.

It belongs to the aconitase/IPM isomerase family. LeuC type 1 subfamily. Heterodimer of LeuC and LeuD. The cofactor is [4Fe-4S] cluster.

It carries out the reaction (2R,3S)-3-isopropylmalate = (2S)-2-isopropylmalate. The protein operates within amino-acid biosynthesis; L-leucine biosynthesis; L-leucine from 3-methyl-2-oxobutanoate: step 2/4. Functionally, catalyzes the isomerization between 2-isopropylmalate and 3-isopropylmalate, via the formation of 2-isopropylmaleate. This is 3-isopropylmalate dehydratase large subunit from Janthinobacterium sp. (strain Marseille) (Minibacterium massiliensis).